A 556-amino-acid polypeptide reads, in one-letter code: Formate--tetrahydrofolate ligase (556 aa).

Position 65-72 (65-72 (TPAGEGKS)) interacts with ATP.

It belongs to the formate--tetrahydrofolate ligase family.

The catalysed reaction is (6S)-5,6,7,8-tetrahydrofolate + formate + ATP = (6R)-10-formyltetrahydrofolate + ADP + phosphate. The protein operates within one-carbon metabolism; tetrahydrofolate interconversion. This is Formate--tetrahydrofolate ligase from Clostridium botulinum (strain Alaska E43 / Type E3).